Consider the following 403-residue polypeptide: Serine/threonine transporter SstT (403 aa).

10 consecutive transmembrane segments (helical) span residues 15 to 35 (LGLI…AIVW), 49 to 69 (FISA…MTAI), 85 to 105 (LLYV…SFIF), 142 to 162 (ALLN…GMML), 183 to 203 (IVQL…AGTL), 218 to 238 (LAVI…LIVF), 246 to 268 (YPLV…SSAA), 289 to 309 (ISIP…ISVI), 317 to 337 (LGIG…SLAA), and 362 to 382 (PDVA…QDAT).

It belongs to the dicarboxylate/amino acid:cation symporter (DAACS) (TC 2.A.23) family.

It localises to the cell inner membrane. The enzyme catalyses L-serine(in) + Na(+)(in) = L-serine(out) + Na(+)(out). It carries out the reaction L-threonine(in) + Na(+)(in) = L-threonine(out) + Na(+)(out). Involved in the import of serine and threonine into the cell, with the concomitant import of sodium (symport system). This is Serine/threonine transporter SstT from Chromohalobacter salexigens (strain ATCC BAA-138 / DSM 3043 / CIP 106854 / NCIMB 13768 / 1H11).